We begin with the raw amino-acid sequence, 279 residues long: UTP--glucose-1-phosphate uridylyltransferase (279 aa).

It belongs to the UDPGP type 2 family.

It catalyses the reaction alpha-D-glucose 1-phosphate + UTP + H(+) = UDP-alpha-D-glucose + diphosphate. May play a role in stationary phase survival. The sequence is that of UTP--glucose-1-phosphate uridylyltransferase (galU) from Pseudomonas aeruginosa (strain ATCC 15692 / DSM 22644 / CIP 104116 / JCM 14847 / LMG 12228 / 1C / PRS 101 / PAO1).